The following is a 546-amino-acid chain: Chaperonin GroEL (546 aa).

ATP is bound by residues 30–33, K51, 87–91, G415, 479–481, and D495; these read TLGP, DGTTT, and NAA.

The protein belongs to the chaperonin (HSP60) family. As to quaternary structure, forms a cylinder of 14 subunits composed of two heptameric rings stacked back-to-back. Interacts with the co-chaperonin GroES.

It localises to the cytoplasm. The catalysed reaction is ATP + H2O + a folded polypeptide = ADP + phosphate + an unfolded polypeptide.. Together with its co-chaperonin GroES, plays an essential role in assisting protein folding. The GroEL-GroES system forms a nano-cage that allows encapsulation of the non-native substrate proteins and provides a physical environment optimized to promote and accelerate protein folding. The chain is Chaperonin GroEL from Paraburkholderia phytofirmans (strain DSM 17436 / LMG 22146 / PsJN) (Burkholderia phytofirmans).